We begin with the raw amino-acid sequence, 112 residues long: Ferredoxin, plant-type (112 aa).

The 92-residue stretch at 6-97 folds into the 2Fe-2S ferredoxin-type domain; sequence YEVFEVLSGQ…DLTIEYFRHV (92 aa). Residues C41, C46, C49, and C81 each coordinate [2Fe-2S] cluster.

The protein belongs to the 2Fe2S plant-type ferredoxin family.

Its pathway is aromatic compound metabolism; catechol degradation. Ferredoxins are iron-sulfur proteins that transfer electrons in a wide variety of metabolic reactions. This Pseudomonas putida (Arthrobacter siderocapsulatus) protein is Ferredoxin, plant-type (xylT).